We begin with the raw amino-acid sequence, 350 residues long: tRNA-splicing endonuclease (350 aa).

Active-site residues include tyrosine 286, histidine 297, and lysine 328.

The protein belongs to the tRNA-intron endonuclease family. Archaeal long subfamily. Homodimer.

It catalyses the reaction pretRNA = a 3'-half-tRNA molecule with a 5'-OH end + a 5'-half-tRNA molecule with a 2',3'-cyclic phosphate end + an intron with a 2',3'-cyclic phosphate and a 5'-hydroxyl terminus.. Its function is as follows. Endonuclease that removes tRNA introns. Cleaves pre-tRNA at the 5'- and 3'-splice sites to release the intron. The products are an intron and two tRNA half-molecules bearing 2',3' cyclic phosphate and 5'-OH termini. Recognizes a pseudosymmetric substrate in which 2 bulged loops of 3 bases are separated by a stem of 4 bp. The protein is tRNA-splicing endonuclease of Methanosarcina acetivorans (strain ATCC 35395 / DSM 2834 / JCM 12185 / C2A).